The following is a 364-amino-acid chain: Fructose-bisphosphate aldolase A (364 aa).

At Tyr-5 the chain carries Phosphotyrosine. Thr-9 bears the Phosphothreonine mark. 2 positions are modified to phosphoserine: Ser-36 and Ser-39. Position 42 is an N6-acetyllysine; alternate (Lys-42). Lys-42 participates in a covalent cross-link: Glycyl lysine isopeptide (Lys-Gly) (interchain with G-Cter in SUMO1); alternate. Lys-42 is covalently cross-linked (Glycyl lysine isopeptide (Lys-Gly) (interchain with G-Cter in SUMO2); alternate). Arg-43 contributes to the beta-D-fructose 1,6-bisphosphate binding site. Ser-46 is modified (phosphoserine). Lys-99 is modified (N6-(2-hydroxyisobutyryl)lysine). Lys-108 carries the N6-acetyllysine modification. The residue at position 111 (Lys-111) is an N6-acetyllysine; alternate. Lys-111 carries the post-translational modification N6-malonyllysine; alternate. Residue Ser-132 is modified to Phosphoserine. An N6-(2-hydroxyisobutyryl)lysine modification is found at Lys-147. Glu-188 serves as the catalytic Proton acceptor. Lys-230 acts as the Schiff-base intermediate with dihydroxyacetone-P in catalysis. Ser-272 bears the Phosphoserine mark. Beta-D-fructose 1,6-bisphosphate-binding positions include 272-274 (SGG), Ser-301, and Arg-304. Position 312 is an N6-malonyllysine (Lys-312). Lys-330 bears the N6-acetyllysine mark.

This sequence belongs to the class I fructose-bisphosphate aldolase family. In terms of assembly, homotetramer. Interacts with SNX9 and WAS. Interacts with FBP2; the interaction blocks FBP2 inhibition by physiological concentrations of AMP and reduces inhibition by Ca(2+). As to expression, expressed in muscle, brain and hepatoma cells.

Its subcellular location is the cytoplasm. It localises to the myofibril. The protein localises to the sarcomere. The protein resides in the i band. It is found in the m line. The catalysed reaction is beta-D-fructose 1,6-bisphosphate = D-glyceraldehyde 3-phosphate + dihydroxyacetone phosphate. The protein operates within carbohydrate degradation; glycolysis; D-glyceraldehyde 3-phosphate and glycerone phosphate from D-glucose: step 4/4. In terms of biological role, catalyzes the reversible conversion of beta-D-fructose 1,6-bisphosphate (FBP) into two triose phosphate and plays a key role in glycolysis and gluconeogenesis. In addition, may also function as scaffolding protein. This Rattus norvegicus (Rat) protein is Fructose-bisphosphate aldolase A (Aldoa).